The sequence spans 503 residues: Maturase K (503 aa).

This sequence belongs to the intron maturase 2 family. MatK subfamily.

The protein localises to the plastid. It localises to the chloroplast. Functionally, usually encoded in the trnK tRNA gene intron. Probably assists in splicing its own and other chloroplast group II introns. The chain is Maturase K from Cercocarpus betuloides (Mountain mahogany).